We begin with the raw amino-acid sequence, 301 residues long: L-threonate dehydrogenase (301 aa).

Residues Tyr6–Ile34 and Thr101 contribute to the NAD(+) site. The active site involves Lys177. Lys245 serves as a coordination point for NAD(+).

It belongs to the HIBADH-related family. L-threonate dehydrogenase subfamily.

The catalysed reaction is L-threonate + NAD(+) = 2-dehydro-L-erythronate + NADH + H(+). Functionally, catalyzes oxidation of L-threonate to 2-oxo-tetronate. Can use either NAD(+) or NADP(+) as cosubstrate, with a preference for NAD(+). The polypeptide is L-threonate dehydrogenase (Haemophilus influenzae (strain ATCC 51907 / DSM 11121 / KW20 / Rd)).